The sequence spans 126 residues: Thioredoxin domain-containing protein, mitochondrial (126 aa).

The Thioredoxin domain maps to 14–120 (SQKIATNTSF…ILEFLNHIET (107 aa)).

Belongs to the thioredoxin family.

It localises to the mitochondrion. This chain is Thioredoxin domain-containing protein, mitochondrial, found in Dictyostelium discoideum (Social amoeba).